A 302-amino-acid chain; its full sequence is Acetylglutamate kinase (302 aa).

Substrate-binding positions include 73 to 74, arginine 95, and asparagine 200; that span reads GG.

This sequence belongs to the acetylglutamate kinase family. ArgB subfamily.

The protein localises to the cytoplasm. The enzyme catalyses N-acetyl-L-glutamate + ATP = N-acetyl-L-glutamyl 5-phosphate + ADP. Its pathway is amino-acid biosynthesis; L-arginine biosynthesis; N(2)-acetyl-L-ornithine from L-glutamate: step 2/4. In terms of biological role, catalyzes the ATP-dependent phosphorylation of N-acetyl-L-glutamate. The chain is Acetylglutamate kinase from Sphingopyxis alaskensis (strain DSM 13593 / LMG 18877 / RB2256) (Sphingomonas alaskensis).